We begin with the raw amino-acid sequence, 130 residues long: Probable 15 kDa heat shock protein (130 aa).

The region spanning 21 to 130 (ERVRILAPRV…LTKKIEVRSE (110 aa)) is the sHSP domain.

The protein belongs to the small heat shock protein (HSP20) family.

This is Probable 15 kDa heat shock protein (hsp15) from Leptospira interrogans serogroup Icterohaemorrhagiae serovar Lai (strain 56601).